Consider the following 557-residue polypeptide: Potassium-transporting ATPase potassium-binding subunit (557 aa).

12 helical membrane-spanning segments follow: residues 5–25, 63–83, 132–152, 170–190, 253–273, 283–303, 329–349, 356–376, 379–399, 416–436, 484–504, and 526–546; these read GFLL…PLGS, LSAI…MLLG, GLTV…FALI, LLRI…LFFI, FVQM…FGEV, LLWA…WAEV, VLVS…AVIA, ALGG…FGGV, GLYG…LMIG, LTAL…ALAM, LLAL…MAIA, and LFVG…FIPA.

This sequence belongs to the KdpA family. In terms of assembly, the system is composed of three essential subunits: KdpA, KdpB and KdpC.

The protein resides in the cell inner membrane. In terms of biological role, part of the high-affinity ATP-driven potassium transport (or Kdp) system, which catalyzes the hydrolysis of ATP coupled with the electrogenic transport of potassium into the cytoplasm. This subunit binds the periplasmic potassium ions and delivers the ions to the membrane domain of KdpB through an intramembrane tunnel. In Escherichia coli O6:K15:H31 (strain 536 / UPEC), this protein is Potassium-transporting ATPase potassium-binding subunit.